A 501-amino-acid chain; its full sequence is UPF0371 protein CD630_08980 (501 aa).

The protein belongs to the UPF0371 family.

The protein is UPF0371 protein CD630_08980 of Clostridioides difficile (strain 630) (Peptoclostridium difficile).